Here is a 351-residue protein sequence, read N- to C-terminus: UDP-3-O-acylglucosamine N-acyltransferase (351 aa).

Catalysis depends on His-240, which acts as the Proton acceptor.

It belongs to the transferase hexapeptide repeat family. LpxD subfamily. As to quaternary structure, homotrimer.

The catalysed reaction is a UDP-3-O-[(3R)-3-hydroxyacyl]-alpha-D-glucosamine + a (3R)-hydroxyacyl-[ACP] = a UDP-2-N,3-O-bis[(3R)-3-hydroxyacyl]-alpha-D-glucosamine + holo-[ACP] + H(+). It participates in bacterial outer membrane biogenesis; LPS lipid A biosynthesis. Its function is as follows. Catalyzes the N-acylation of UDP-3-O-acylglucosamine using 3-hydroxyacyl-ACP as the acyl donor. Is involved in the biosynthesis of lipid A, a phosphorylated glycolipid that anchors the lipopolysaccharide to the outer membrane of the cell. The sequence is that of UDP-3-O-acylglucosamine N-acyltransferase from Pseudomonas putida (strain ATCC 47054 / DSM 6125 / CFBP 8728 / NCIMB 11950 / KT2440).